Reading from the N-terminus, the 419-residue chain is Prolyl hydroxylase EGLN2 (419 aa).

Low complexity-rich tracts occupy residues 1 to 18 (MDSPCQPQALNQALPQLP) and 64 to 73 (TTATATTTTA). Disordered stretches follow at residues 1–89 (MDSP…GELW) and 108–181 (AAQG…REEV). A Bipartite nuclear localization signal motif is present at residues 89 to 134 (WPLQSEGAAALVTKECQRLAAQGARPEAPKRKWAKDGGDAPSPSKR). The span at 115–126 (EAPKRKWAKDGG) shows a compositional bias: basic and acidic residues. The residue at position 130 (S130) is a Phosphoserine. Low complexity predominate over residues 154–174 (SGASNSSSSSSNTTSSSGEAS). The tract at residues 237–247 (VSQRAIPPRSI) is beta(2)beta(3) 'finger-like' loop. Residues 290 to 388 (GRTKAMVACY…RYAITVWYFD (99 aa)) enclose the Fe2OG dioxygenase domain. H309, D311, and H370 together coordinate Fe cation. R379 serves as a coordination point for 2-oxoglutarate.

As to quaternary structure, interacts with E3 ligase SIAH2. Interacts with LIMD1, WTIP and AJUBA. It depends on Fe(2+) as a cofactor. Requires L-ascorbate as cofactor. Post-translationally, ubiquitinated by SIAH1 and/or SIAH2 in response to the unfolded protein response (UPR), leading to its degradation. As to expression, highly expressed in testis, expression was also detected in the heart brain, liver kidney and lung. Expression was lowest in spleen and skeletal muscle. Constitutively expressed during differentiation of C2C12 skeletal myocytes.

The protein localises to the nucleus. It catalyses the reaction L-prolyl-[protein] + 2-oxoglutarate + O2 = trans-4-hydroxy-L-prolyl-[protein] + succinate + CO2. It carries out the reaction L-prolyl-[hypoxia-inducible factor alpha subunit] + 2-oxoglutarate + O2 = trans-4-hydroxy-L-prolyl-[hypoxia-inducible factor alpha subunit] + succinate + CO2. Its function is as follows. Prolyl hydroxylase that mediates hydroxylation of proline residues in target proteins, such as ATF4, IKBKB, CEP192 and HIF1A. Target proteins are preferentially recognized via a LXXLAP motif. Cellular oxygen sensor that catalyzes, under normoxic conditions, the post-translational formation of 4-hydroxyproline in hypoxia-inducible factor (HIF) alpha proteins. Hydroxylates a specific proline found in each of the oxygen-dependent degradation (ODD) domains (N-terminal, NODD, and C-terminal, CODD) of HIF1A. Also hydroxylates HIF2A. Has a preference for the CODD site for both HIF1A and HIF2A. Hydroxylated HIFs are then targeted for proteasomal degradation via the von Hippel-Lindau ubiquitination complex. Under hypoxic conditions, the hydroxylation reaction is attenuated allowing HIFs to escape degradation resulting in their translocation to the nucleus, heterodimerization with HIF1B, and increased expression of hypoxy-inducible genes. EGLN2 is involved in regulating hypoxia tolerance and apoptosis in cardiac and skeletal muscle. Also regulates susceptibility to normoxic oxidative neuronal death. Links oxygen sensing to cell cycle and primary cilia formation by hydroxylating the critical centrosome component CEP192 which promotes its ubiquitination and subsequent proteasomal degradation. Hydroxylates IKBKB, mediating NF-kappa-B activation in hypoxic conditions. Also mediates hydroxylation of ATF4, leading to decreased protein stability of ATF4. This is Prolyl hydroxylase EGLN2 from Mus musculus (Mouse).